A 485-amino-acid chain; its full sequence is Dynein axonemal assembly factor 3 (485 aa).

Belongs to the DNAAF3 family.

It localises to the cytoplasm. It is found in the dynein axonemal particle. Functionally, required for the assembly of axonemal inner and outer dynein arms. Involved in preassembly of dyneins into complexes before their transport into cilia. This Xenopus laevis (African clawed frog) protein is Dynein axonemal assembly factor 3 (dnaaf3).